The chain runs to 115 residues: Mediator of RNA polymerase II transcription subunit 11 (115 aa).

Residues 56-107 are a coiled coil; that stretch reads YERLDKSTTQLRKEIQLLDENVGTRLLPINVNKKALGQDTEKMEEQLDLLSA.

Belongs to the mediator complex subunit 11 family. As to quaternary structure, component of the Mediator complex, which is composed of at least 21 subunits that form three structurally distinct submodules. The Mediator head module contains MED6, MED8, MED11, SRB4/MED17, SRB5/MED18, ROX3/MED19, SRB2/MED20 and SRB6/MED22, the middle module contains MED1, MED4, NUT1/MED5, MED7, CSE2/MED9, NUT2/MED10, SRB7/MED21 and SOH1/MED31, and the tail module contains MED2, PGD1/MED3, RGR1/MED14, GAL11/MED15 and SIN4/MED16. The head and the middle modules interact directly with RNA polymerase II, whereas the elongated tail module interacts with gene-specific regulatory proteins. MED11 forms a heterodimer with SRB6/MED22. The MED11/22 heterodimer binds to and stabilizes the central head subunit SRB4/MED17. Interacts with TFIIH subunit RAD3.

It is found in the nucleus. Its function is as follows. Component of the Mediator complex, a coactivator involved in the regulated transcription of nearly all RNA polymerase II-dependent genes. Mediator functions as a bridge to convey information from gene-specific regulatory proteins to the basal RNA polymerase II transcription machinery. The Mediator complex, having a compact conformation in its free form, is recruited to promoters by direct interactions with regulatory proteins and serves for the assembly of a functional pre-initiation complex (PIC) with RNA polymerase II and the general transcription factors. The Mediator complex unfolds to an extended conformation and partially surrounds RNA polymerase II, specifically interacting with the unphosphorylated form of the C-terminal domain (CTD) of RNA polymerase II. The Mediator complex dissociates from the RNA polymerase II holoenzyme and stays at the promoter when transcriptional elongation begins. The essential MED11/22 heterodimer specifically functions in promoting stable PIC formation. In Saccharomyces cerevisiae (strain ATCC 204508 / S288c) (Baker's yeast), this protein is Mediator of RNA polymerase II transcription subunit 11 (MED11).